The sequence spans 143 residues: 18 kDa heat shock protein (143 aa).

The sHSP domain maps to 23–135 (TWSRPTAMPM…KRRRVKVGQG (113 aa)).

The protein belongs to the small heat shock protein (HSP20) family.

This is 18 kDa heat shock protein (hsp18) from Streptomyces albus G.